The primary structure comprises 446 residues: Xanthone prenyltransferase A (446 aa).

Positions 113, 199, 201, 263, 265, 267, 369, and 440 each coordinate dimethylallyl diphosphate.

This sequence belongs to the tryptophan dimethylallyltransferase family.

Its pathway is secondary metabolite biosynthesis. Functionally, xanthone prenyltransferase involved in the conversion of monodictyphenone to the prenyl xanthones such as emericellin, shamixanthone and epishamixanthone. Monodictyphenone is first converted to variecoxanthone A via a paeciloxanthone intermediate by the consecutive actions of the FAD-dependent monooxygenase mdpD and the xanthone prenyltransferase xptB. XptB catalyzes regular O-prenylation at the hydroxy group of C-7 of the xanthone ring. Variecoxanthone A is further prenylated to emericellin by xptA before being reduced to shamixanthone and epishamixanthone by the dehydrogenase xptC. This is Xanthone prenyltransferase A from Emericella nidulans (strain FGSC A4 / ATCC 38163 / CBS 112.46 / NRRL 194 / M139) (Aspergillus nidulans).